The chain runs to 3072 residues: E1A-binding protein p400 (3072 aa).

Residues 1–22 (MHHGSGPQNVQHQLQRSRSFTG) are compositionally biased toward polar residues. Disordered stretches follow at residues 1–55 (MHHG…SPGY), 125–149 (PMSQ…LQNV), and 222–250 (LSQP…TGLQ). Positions 31–40 (PNLPPSPAAP) are enriched in pro residues. Composition is skewed to low complexity over residues 41-53 (FAPS…PQSP) and 125-136 (PMSQQVQTQSPT). A phosphoserine mark is found at Ser-52 and Ser-134. Residues Ser-315 and Ser-321 each carry the phosphoserine modification. 3 disordered regions span residues 485–519 (SLTG…KRPR), 544–601 (MPTV…ASVP), and 635–769 (APIP…SQDK). A compositionally biased stretch (low complexity) spans 556 to 569 (QATQLTGQKQSQQQ). A compositionally biased stretch (polar residues) spans 570–583 (YDPSTGPPVQNAAS). Positions 586–599 (TPPPQLPARLPPAS) are enriched in pro residues. Low complexity-rich tracts occupy residues 646-657 (PAPSSQPAQPAL), 668-682 (QTSQ…VAST), and 695-710 (SLPT…PVSG). 2 stretches are compositionally biased toward polar residues: residues 724-741 (NRPS…TSRS) and 754-765 (SPAQNAASSQDG). 3 positions are modified to phosphoserine: Ser-735, Ser-741, and Ser-754. Positions 798–870 (LPKLQEAPRP…EQSRLRRIAA (73 aa)) constitute an HSA domain. The segment covering 914–928 (ESRLKGFDTSPEHSL) has biased composition (basic and acidic residues). Disordered stretches follow at residues 914 to 952 (ESRL…EDEE) and 997 to 1024 (FQWP…DRES). Phosphothreonine is present on Thr-922. Residues Ser-923, Ser-927, and Ser-940 each carry the phosphoserine modification. Residue Thr-944 is modified to Phosphothreonine. Positions 950–1364 (DEEETIEEEE…SVLSVLTRLQ (415 aa)) are interactions with RUVBL1 and RUVBL2. Residues Ser-1009 and Ser-1010 each carry the phosphoserine modification. Positions 1102 to 1267 (AKLYRKNLNG…WTMVHFLIPG (166 aa)) constitute a Helicase ATP-binding domain. 1115 to 1122 (DEAGLGKT) serves as a coordination point for ATP. The DEAD box-like signature appears at 1218-1221 (DEMQ). Lys-1471 carries the post-translational modification N6-acetyllysine. Positions 1473–1503 (EGRTVAFPSTHPPRMANTNTSTATPQGQVRG) are disordered. A compositionally biased stretch (polar residues) spans 1488–1499 (ANTNTSTATPQG). Phosphoserine occurs at positions 1646 and 1650. The Helicase C-terminal domain occupies 1815–1972 (KLEALAILLQ…GNDYSMAFLT (158 aa)). Disordered regions lie at residues 2033 to 2062 (AQRS…DEEP) and 2203 to 2227 (KERK…GEAV). Residues 2043–2053 (GSSSVAVSSDS) show a composition bias toward low complexity. Lys-2265 and Lys-2272 each carry N6-acetyllysine. In terms of domain architecture, Myb-like spans 2276-2345 (EPAQDSPDWL…QCRNRYENVI (70 aa)). An interaction with ZNF42 region spans residues 2440–2699 (KEKKALADQQ…QQQQQQQQQT (260 aa)). Residues 2441–2534 (EKKALADQQK…PQSKGQPTMT (94 aa)) form a disordered region. Low complexity-rich tracts occupy residues 2446 to 2455 (ADQQKAQQPP) and 2463 to 2478 (QQQQ…QQQQ). Positions 2479–2493 (QPPPPPQQPPPPVPQ) are enriched in pro residues. Positions 2494–2526 (PQAASSQTPAGQPAVQPQPQPQVQTQPQPVQPQ) are enriched in low complexity. Ser-2614 is subject to Phosphoserine. Disordered stretches follow at residues 2734-2790 (QKMQ…TGTT) and 3028-3072 (ASLQ…PPCQ). The span at 2739 to 2754 (PPQPPPPQAQPGPPQQ) shows a compositional bias: pro residues. A compositionally biased stretch (low complexity) spans 2755-2775 (PAQVQVQTPQPPQQQQSPQLT). Residues 3042–3053 (PASSDSPSQQPK) are compositionally biased toward polar residues.

This sequence belongs to the SNF2/RAD54 helicase family. SWR1 subfamily. Component of the NuA4 histone acetyltransferase complex which contains the catalytic subunit KAT5/TIP60 and the subunits EP400, TRRAP/PAF400, BRD8/SMAP, EPC1, DMAP1/DNMAP1, RUVBL1/TIP49, RUVBL2, ING3, actin, ACTL6A/BAF53A, MORF4L1/MRG15, MORF4L2/MRGX, MRGBP, YEATS4/GAS41, VPS72/YL1 and MEAF6. May also participate in the formation of NuA4 related complexes which lack the KAT5/TIP60 catalytic subunit, but which include the SWI/SNF related protein SRCAP. The NuA4 complex interacts with MYC. EP400 interacts with TRRAP, RUVBL1 and RUVBL2. Component of a SWR1-like complex. Interacts with ZNF42. Interacts with PHF5A. In terms of tissue distribution, expressed in brain, thymus, lung, liver, spleen, kidney, colon and bone marrow.

The protein resides in the nucleus. Functionally, component of the NuA4 histone acetyltransferase complex which is involved in transcriptional activation of select genes principally by acetylation of nucleosomal histones H4 and H2A. This modification may both alter nucleosome - DNA interactions and promote interaction of the modified histones with other proteins which positively regulate transcription. May be required for transcriptional activation of E2F1 and MYC target genes during cellular proliferation. The NuA4 complex ATPase and helicase activities seem to be, at least in part, contributed by the association of RUVBL1 and RUVBL2 with EP400. Component of a SWR1-like complex that specifically mediates the removal of histone H2A.Z/H2AZ1 from the nucleosome. Regulates transcriptional activity of ZNF42. The polypeptide is E1A-binding protein p400 (Ep400) (Mus musculus (Mouse)).